Consider the following 320-residue polypeptide: Ferrochelatase (320 aa).

Residues His194 and Glu275 each contribute to the Fe cation site.

Belongs to the ferrochelatase family.

It localises to the cytoplasm. It carries out the reaction heme b + 2 H(+) = protoporphyrin IX + Fe(2+). It participates in porphyrin-containing compound metabolism; protoheme biosynthesis; protoheme from protoporphyrin-IX: step 1/1. Its function is as follows. Catalyzes the ferrous insertion into protoporphyrin IX. The sequence is that of Ferrochelatase from Cronobacter sakazakii (strain ATCC BAA-894) (Enterobacter sakazakii).